We begin with the raw amino-acid sequence, 194 residues long: Phosphoheptose isomerase (194 aa).

Residues 34–188 form the SIS domain; the sequence is LANIFTKGKK…IEGVERIMFP (155 aa). 49–51 provides a ligand contact to substrate; sequence NGG. Zn(2+) is bound by residues histidine 58 and glutamate 62. Substrate-binding positions include glutamate 62, 90–91, 116–118, serine 121, and glutamine 168; these read ND and STS. The Zn(2+) site is built by glutamine 168 and histidine 176.

It belongs to the SIS family. GmhA subfamily. The cofactor is Zn(2+).

It localises to the cytoplasm. It carries out the reaction 2 D-sedoheptulose 7-phosphate = D-glycero-alpha-D-manno-heptose 7-phosphate + D-glycero-beta-D-manno-heptose 7-phosphate. It functions in the pathway carbohydrate biosynthesis; D-glycero-D-manno-heptose 7-phosphate biosynthesis; D-glycero-alpha-D-manno-heptose 7-phosphate and D-glycero-beta-D-manno-heptose 7-phosphate from sedoheptulose 7-phosphate: step 1/1. Catalyzes the isomerization of sedoheptulose 7-phosphate in D-glycero-D-manno-heptose 7-phosphate. This Fusobacterium nucleatum subsp. nucleatum (strain ATCC 25586 / DSM 15643 / BCRC 10681 / CIP 101130 / JCM 8532 / KCTC 2640 / LMG 13131 / VPI 4355) protein is Phosphoheptose isomerase.